Reading from the N-terminus, the 391-residue chain is Cathepsin E (391 aa).

The N-terminal stretch at 1 to 19 (MKTFLLLLLVLLELGQAPG) is a signal peptide. Residues 20 to 53 (ALHRVPLSRRESLRKKLRAQGQLTELWKSQNLNM) constitute a propeptide, activation peptide. The 314-residue stretch at 74–387 (YFGTISIGSP…DRGNNRVGLA (314 aa)) folds into the Peptidase A1 domain. The N-linked (GlcNAc...) asparagine glycan is linked to Asn86. Asp92 is an active-site residue. Disulfide bonds link Cys105/Cys110 and Cys267/Cys271. The active site involves Asp276. A disulfide bond links Cys309 and Cys346.

It belongs to the peptidase A1 family. As to quaternary structure, homodimer; disulfide-linked. Glycosylated. The nature of the carbohydrate chain varies between cell types. Expressed abundantly in the surface and foveolar epithelial cells of the fundic and pyloric stomach mucosa, and at very low levels in the spleen.

The protein resides in the endosome. The enzyme catalyses Similar to cathepsin D, but slightly broader specificity.. Its function is as follows. May have a role in immune function. Probably involved in the processing of antigenic peptides during MHC class II-mediated antigen presentation. May play a role in activation-induced lymphocyte depletion in the thymus, and in neuronal degeneration and glial cell activation in the brain. This chain is Cathepsin E (CTSE), found in Cavia porcellus (Guinea pig).